Here is a 269-residue protein sequence, read N- to C-terminus: Malonyl-[acyl-carrier protein] O-methyltransferase (269 aa).

It belongs to the methyltransferase superfamily.

The catalysed reaction is malonyl-[ACP] + S-adenosyl-L-methionine = malonyl-[ACP] methyl ester + S-adenosyl-L-homocysteine. The protein operates within cofactor biosynthesis; biotin biosynthesis. Its function is as follows. Converts the free carboxyl group of a malonyl-thioester to its methyl ester by transfer of a methyl group from S-adenosyl-L-methionine (SAM). It allows to synthesize pimeloyl-ACP via the fatty acid synthetic pathway. The sequence is that of Malonyl-[acyl-carrier protein] O-methyltransferase from Bacillus cereus (strain ATCC 14579 / DSM 31 / CCUG 7414 / JCM 2152 / NBRC 15305 / NCIMB 9373 / NCTC 2599 / NRRL B-3711).